The chain runs to 475 residues: Glutamyl-tRNA(Gln) amidotransferase subunit A (475 aa).

Active-site charge relay system residues include K76 and S151. The active-site Acyl-ester intermediate is the S175.

The protein belongs to the amidase family. GatA subfamily. In terms of assembly, heterotrimer of A, B and C subunits.

It carries out the reaction L-glutamyl-tRNA(Gln) + L-glutamine + ATP + H2O = L-glutaminyl-tRNA(Gln) + L-glutamate + ADP + phosphate + H(+). Its function is as follows. Allows the formation of correctly charged Gln-tRNA(Gln) through the transamidation of misacylated Glu-tRNA(Gln) in organisms which lack glutaminyl-tRNA synthetase. The reaction takes place in the presence of glutamine and ATP through an activated gamma-phospho-Glu-tRNA(Gln). The protein is Glutamyl-tRNA(Gln) amidotransferase subunit A of Pelodictyon phaeoclathratiforme (strain DSM 5477 / BU-1).